Here is a 310-residue protein sequence, read N- to C-terminus: tRNA pseudouridine synthase B (310 aa).

The active-site Nucleophile is the D47.

Belongs to the pseudouridine synthase TruB family. Type 1 subfamily.

The enzyme catalyses uridine(55) in tRNA = pseudouridine(55) in tRNA. In terms of biological role, responsible for synthesis of pseudouridine from uracil-55 in the psi GC loop of transfer RNAs. This is tRNA pseudouridine synthase B from Caulobacter vibrioides (strain ATCC 19089 / CIP 103742 / CB 15) (Caulobacter crescentus).